The following is a 977-amino-acid chain: Ephrin type-A receptor 2 (977 aa).

A signal peptide spans 1 to 25; that stretch reads MELRAVGFCLALLWGCALAAAAAQG. The tract at residues 1–205 is mediates interaction with CLDN4; that stretch reads MELRAVGFCL…YYKKCPEMLQ (205 aa). The Extracellular segment spans residues 26–538; it reads KEVVLLDFAA…STEGSANMAV (513 aa). Residues 27 to 205 form the Eph LBD domain; the sequence is EVVLLDFAAM…YYKKCPEMLQ (179 aa). 2 disulfide bridges follow: C69–C187 and C104–C114. A Fibronectin type-III 1 domain is found at 329–433; sequence PPSAPNYLTA…TSRSFRTASV (105 aa). N-linked (GlcNAc...) asparagine glycans are attached at residues N408 and N436. Residues 439 to 530 form the Fibronectin type-III 2 domain; it reads EPPKVRLEDR…KVHEFQTLST (92 aa). The chain crosses the membrane as a helical span at residues 539-559; sequence IGGVAVGVVLLLVLAGVGLFI. The Cytoplasmic segment spans residues 560-977; that stretch reads HRRRRNLRAR…DQVNTVGIPI (418 aa). Phosphoserine occurs at positions 571 and 580. Phosphotyrosine; by autocatalysis is present on residues Y589 and Y595. The segment at 607–907 is mediates interaction with ARHGEF16; sequence TEIHPSCVAR…STSGSEGVPF (301 aa). The 263-residue stretch at 614-876 folds into the Protein kinase domain; sequence VARQKVIGAG…DIVSILDKLI (263 aa). ATP is bound at residue 620–628; that stretch reads IGAGEFGEV. Y629 is modified (phosphotyrosine). An ATP-binding site is contributed by K647. T648 is modified (phosphothreonine). Y736 is modified (phosphotyrosine; by autocatalysis). The active-site Proton acceptor is the D740. Y773 is modified (phosphotyrosine; by autocatalysis). S870, S893, S898, and S902 each carry phosphoserine. The negatively regulates interaction with ARHGEF16 stretch occupies residues 887 to 977; that stretch reads DFDPRVSIRL…DQVNTVGIPI (91 aa). Positions 905–969 constitute an SAM domain; the sequence is VPFRTVSEWL…AYSLLGLKDQ (65 aa). Y922 is subject to Phosphotyrosine; by autocatalysis. Y931 is modified (phosphotyrosine). Residues 975–977 carry the PDZ-binding motif; the sequence is IPI.

This sequence belongs to the protein kinase superfamily. Tyr protein kinase family. Ephrin receptor subfamily. As to quaternary structure, homodimer. Interacts with INPPL1; regulates activated EPHA2 endocytosis and degradation. Interacts (inactivated form) with PTK2/FAK1 and interacts (EFNA1 ligand-activated form) with PTPN11; regulates integrin-mediated adhesion. Interacts with ARHGEF16, DOCK4 and ELMO2; mediates ligand-independent activation of RAC1 which stimulates cell migration. Interacts with CLDN4; phosphorylates CLDN4 and may regulate tight junctions. Interacts with ACP1. Interacts with CEMIP. Interacts with NCK1; may regulate EPHA2 activity in cell migration and adhesion. Interacts with SLA. Interacts (phosphorylated form) with VAV2, VAV3 and PI3-kinase p85 subunit (PIK3R1, PIK3R2 or PIK3R3); critical for the EFNA1-induced activation of RAC1 which stimulates cell migration. Interacts with ANKS1A. Interacts with TIMD4. Post-translationally, autophosphorylates. Phosphorylated at Ser-898 by PKB; serum-induced phosphorylation which targets EPHA2 to the cell leading edge and stimulates cell migration. Phosphorylation by PKB is inhibited by EFNA1-activated EPHA2 which regulates PKB activity via a reciprocal regulatory loop. Phosphorylated on tyrosine upon binding and activation by EFNA1. Phosphorylated residues Tyr-589 and Tyr-595 are required for binding VAV2 and VAV3 while phosphorylated residues Tyr-736 and Tyr-931 are required for binding PI3-kinase p85 subunit (PIK3R1, PIK3R2 or PIK3R3). These phosphorylated residues are critical for recruitment of VAV2 and VAV3 and PI3-kinase p85 subunit which transduce downstream signaling to activate RAC1 GTPase and cell migration. Dephosphorylation of Tyr-931 by PTPRF prevents the interaction of EPHA2 with NCK1. Phosphorylated at Ser-898 in response to TNF by RPS6KA1 and RPS6KA3; RPS6KA-EPHA2 signaling pathway controls cell migration. Phosphorylated at Ser-898 by PKA; blocks cell retraction induced by EPHA2 kinase activity. Dephosphorylated by ACP1. Ubiquitinated by CHIP/STUB1. Ubiquitination is regulated by the HSP90 chaperone and regulates the receptor stability and activity through proteasomal degradation. ANKS1A prevents ubiquitination and degradation. As to expression, expressed in the lung, intestine and liver. Expressed in myogenic progenitor cells.

It localises to the cell membrane. Its subcellular location is the cell projection. The protein resides in the ruffle membrane. It is found in the lamellipodium membrane. The protein localises to the cell junction. It localises to the focal adhesion. It catalyses the reaction L-tyrosyl-[protein] + ATP = O-phospho-L-tyrosyl-[protein] + ADP + H(+). Receptor tyrosine kinase which binds promiscuously membrane-bound ephrin-A family ligands residing on adjacent cells, leading to contact-dependent bidirectional signaling into neighboring cells. The signaling pathway downstream of the receptor is referred to as forward signaling while the signaling pathway downstream of the ephrin ligand is referred to as reverse signaling. Activated by the ligand ephrin-A1/EFNA1 regulates migration, integrin-mediated adhesion, proliferation and differentiation of cells. Regulates cell adhesion and differentiation through DSG1/desmoglein-1 and inhibition of the ERK1/ERK2 signaling pathway. May also participate in UV radiation-induced apoptosis and have a ligand-independent stimulatory effect on chemotactic cell migration. During development, may function in distinctive aspects of pattern formation and subsequently in development of several fetal tissues. Involved for instance in angiogenesis, in early hindbrain development and epithelial proliferation and branching morphogenesis during mammary gland development. Engaged by the ligand ephrin-A5/EFNA5 may regulate lens fiber cells shape and interactions and be important for lens transparency development and maintenance. With ephrin-A2/EFNA2 may play a role in bone remodeling through regulation of osteoclastogenesis and osteoblastogenesis. This Mus musculus (Mouse) protein is Ephrin type-A receptor 2 (Epha2).